The chain runs to 146 residues: uncharacterized protein (146 aa).

This is an uncharacterized protein from Orgyia pseudotsugata multicapsid polyhedrosis virus (OpMNPV).